Here is a 162-residue protein sequence, read N- to C-terminus: Probable chemoreceptor glutamine deamidase CheD (162 aa).

This sequence belongs to the CheD family.

The catalysed reaction is L-glutaminyl-[protein] + H2O = L-glutamyl-[protein] + NH4(+). Its function is as follows. Probably deamidates glutamine residues to glutamate on methyl-accepting chemotaxis receptors (MCPs), playing an important role in chemotaxis. This is Probable chemoreceptor glutamine deamidase CheD from Clostridium botulinum (strain ATCC 19397 / Type A).